A 156-amino-acid chain; its full sequence is uncharacterized protein (156 aa).

The protein belongs to the mimivirus L223/L227/L812 family.

This is an uncharacterized protein from Acanthamoeba polyphaga mimivirus (APMV).